Consider the following 290-residue polypeptide: ATP synthase gamma chain (290 aa).

The protein belongs to the ATPase gamma chain family. F-type ATPases have 2 components, CF(1) - the catalytic core - and CF(0) - the membrane proton channel. CF(1) has five subunits: alpha(3), beta(3), gamma(1), delta(1), epsilon(1). CF(0) has three main subunits: a, b and c.

It is found in the cell membrane. In terms of biological role, produces ATP from ADP in the presence of a proton gradient across the membrane. The gamma chain is believed to be important in regulating ATPase activity and the flow of protons through the CF(0) complex. In Heliobacterium modesticaldum (strain ATCC 51547 / Ice1), this protein is ATP synthase gamma chain.